Reading from the N-terminus, the 121-residue chain is Phosphoribosyl-AMP cyclohydrolase (121 aa).

D74 contacts Mg(2+). C75 contacts Zn(2+). 2 residues coordinate Mg(2+): D76 and D78. Residues C91 and C98 each coordinate Zn(2+).

Belongs to the PRA-CH family. In terms of assembly, homodimer. It depends on Mg(2+) as a cofactor. Zn(2+) serves as cofactor.

Its subcellular location is the cytoplasm. It carries out the reaction 1-(5-phospho-beta-D-ribosyl)-5'-AMP + H2O = 1-(5-phospho-beta-D-ribosyl)-5-[(5-phospho-beta-D-ribosylamino)methylideneamino]imidazole-4-carboxamide. It functions in the pathway amino-acid biosynthesis; L-histidine biosynthesis; L-histidine from 5-phospho-alpha-D-ribose 1-diphosphate: step 3/9. Catalyzes the hydrolysis of the adenine ring of phosphoribosyl-AMP. In Methanothrix thermoacetophila (strain DSM 6194 / JCM 14653 / NBRC 101360 / PT) (Methanosaeta thermophila), this protein is Phosphoribosyl-AMP cyclohydrolase.